The chain runs to 394 residues: Protein BUR2 (394 aa).

Disordered regions lie at residues 1-32 (MVLS…GNPQ) and 372-394 (MSER…KPRF). The span at 9–32 (IANSQPSGNGKTSLDIKQNEGNPQ) shows a compositional bias: polar residues. Basic and acidic residues predominate over residues 372–381 (MSERSIKRPS).

In terms of assembly, belongs to the BUR kinase complex.

The protein resides in the nucleus. Component of the BUR kinase complex involved in transcription regulation. This complex phosphorylates the UBC2/RAD6 ubiquitin-conjugating enzyme (E2), leading to monoubiquitination of histone H2B and the silencing of telomeric-associated genes. Also required for histone H3 methylation. Necessary for the recovery from pheromone-induced growth arrest in the cell cycle G1 phase. The kinase activity of the complex requires the presence of BUR2. Overexpression of BUR2 interferes with mitotic chromosome segregation. This is Protein BUR2 (BUR2) from Kluyveromyces lactis (strain ATCC 8585 / CBS 2359 / DSM 70799 / NBRC 1267 / NRRL Y-1140 / WM37) (Yeast).